The chain runs to 132 residues: Small ribosomal subunit protein uS8 (132 aa).

The protein belongs to the universal ribosomal protein uS8 family. In terms of assembly, part of the 30S ribosomal subunit. Contacts proteins S5 and S12.

Its function is as follows. One of the primary rRNA binding proteins, it binds directly to 16S rRNA central domain where it helps coordinate assembly of the platform of the 30S subunit. The chain is Small ribosomal subunit protein uS8 from Corynebacterium kroppenstedtii (strain DSM 44385 / JCM 11950 / CIP 105744 / CCUG 35717).